The primary structure comprises 361 residues: MVGKIAPIAVDAMGGDHAPGAIVQGAVNAARKGLPVVLVGPEARVREELARHRAASSLPLEVHPATEVVEMHDHPGQAMRRKKDNSIRVCFDLVASGRAAGMVSAGNSGAVMAGAILVLGRPEGVERPAIVSVLPALKGAPLMLDMGAVVDCRPIHLVQFALMGEVYSRRVHGVTRPRVAILSNGEEDTKGTDLTRAAAAALRRAPIDFVGYCEGRDLLTGEVDVIVTDGFTGNVALKTMEGTAKVVGEYLKRALRSTTVSKIGGLLSRAALEGMKKRIDWREVGGAPLVGVNGVGFISHGRSDALAIENAIRRAGDAARTHFIDEIARAVAPSHALLEVPADGAATEQGPTPRRIAPPRT.

The interval 340-361 (VPADGAATEQGPTPRRIAPPRT) is disordered.

It belongs to the PlsX family. In terms of assembly, homodimer. Probably interacts with PlsY.

It localises to the cytoplasm. It carries out the reaction a fatty acyl-[ACP] + phosphate = an acyl phosphate + holo-[ACP]. Its pathway is lipid metabolism; phospholipid metabolism. In terms of biological role, catalyzes the reversible formation of acyl-phosphate (acyl-PO(4)) from acyl-[acyl-carrier-protein] (acyl-ACP). This enzyme utilizes acyl-ACP as fatty acyl donor, but not acyl-CoA. The sequence is that of Phosphate acyltransferase from Anaeromyxobacter dehalogenans (strain 2CP-1 / ATCC BAA-258).